The following is a 271-amino-acid chain: 3-methyl-2-oxobutanoate hydroxymethyltransferase 1 (271 aa).

Mg(2+) contacts are provided by Asp53 and Asp92. 3-methyl-2-oxobutanoate-binding positions include Asp53 to Ser54, Asp92, and Lys120. Mg(2+) is bound at residue Glu122. The active-site Proton acceptor is Glu189.

Belongs to the PanB family. In terms of assembly, homodecamer; pentamer of dimers. Requires Mg(2+) as cofactor.

It localises to the cytoplasm. It carries out the reaction 3-methyl-2-oxobutanoate + (6R)-5,10-methylene-5,6,7,8-tetrahydrofolate + H2O = 2-dehydropantoate + (6S)-5,6,7,8-tetrahydrofolate. The protein operates within cofactor biosynthesis; (R)-pantothenate biosynthesis; (R)-pantoate from 3-methyl-2-oxobutanoate: step 1/2. Its function is as follows. Catalyzes the reversible reaction in which hydroxymethyl group from 5,10-methylenetetrahydrofolate is transferred onto alpha-ketoisovalerate to form ketopantoate. The protein is 3-methyl-2-oxobutanoate hydroxymethyltransferase 1 of Burkholderia cenocepacia (strain HI2424).